We begin with the raw amino-acid sequence, 538 residues long: Chaperonin GroEL (538 aa).

ATP is bound by residues 29–32 (TLGP), 86–90 (DGTTT), Gly-413, 479–481 (DAL), and Asp-495.

It belongs to the chaperonin (HSP60) family. In terms of assembly, forms a cylinder of 14 subunits composed of two heptameric rings stacked back-to-back. Interacts with the co-chaperonin GroES.

Its subcellular location is the cytoplasm. It carries out the reaction ATP + H2O + a folded polypeptide = ADP + phosphate + an unfolded polypeptide.. In terms of biological role, together with its co-chaperonin GroES, plays an essential role in assisting protein folding. The GroEL-GroES system forms a nano-cage that allows encapsulation of the non-native substrate proteins and provides a physical environment optimized to promote and accelerate protein folding. The polypeptide is Chaperonin GroEL (Thermotoga petrophila (strain ATCC BAA-488 / DSM 13995 / JCM 10881 / RKU-1)).